The following is a 166-amino-acid chain: MSVNMEELRHQVMINQFVLAAGCAADQAKQLLQAAHWQFETALSAFFQESNVPSAQHHPHMMCTPSNTPATPPNFPDALAMFSKLRTSESLQNSSSPAASNACSPPGNFNPYWASSPPNQQPVWLPPASPTTHLHHHHHHPQPVWPPNSQPTGGPQKAMAAMDGQR.

A disordered region spans residues 120–166 (QQPVWLPPASPTTHLHHHHHHPQPVWPPNSQPTGGPQKAMAAMDGQR).

It belongs to the UBALD family.

In Xenopus tropicalis (Western clawed frog), this protein is UBA-like domain-containing protein 2 (ubald2).